A 390-amino-acid chain; its full sequence is Cystathionine beta-lyase MetC (390 aa).

N6-(pyridoxal phosphate)lysine is present on Lys200.

Belongs to the trans-sulfuration enzymes family. In terms of assembly, homotetramer. Requires pyridoxal 5'-phosphate as cofactor.

It localises to the cytoplasm. It carries out the reaction L,L-cystathionine + H2O = L-homocysteine + pyruvate + NH4(+). The enzyme catalyses an S-substituted L-cysteine + H2O = a thiol + pyruvate + NH4(+). The protein operates within amino-acid biosynthesis; L-methionine biosynthesis via de novo pathway; L-homocysteine from L-cystathionine: step 1/1. In terms of biological role, catalyzes the transformation of cystathionine into homocysteine. Also exhibits cysteine desulfhydrase activity in vitro, producing sulfide from cysteine. This chain is Cystathionine beta-lyase MetC (metC), found in Bacillus subtilis (strain 168).